The following is a 503-amino-acid chain: Glutamate--tRNA ligase (503 aa).

The 'HIGH' region signature appears at 15–25 (PSPTGHLHVGG). A 'KMSKS' region motif is present at residues 262 to 266 (KLSKR). Lysine 265 is a binding site for ATP.

The protein belongs to the class-I aminoacyl-tRNA synthetase family. Glutamate--tRNA ligase type 1 subfamily. Monomer.

The protein resides in the cytoplasm. The enzyme catalyses tRNA(Glu) + L-glutamate + ATP = L-glutamyl-tRNA(Glu) + AMP + diphosphate. Functionally, catalyzes the attachment of glutamate to tRNA(Glu) in a two-step reaction: glutamate is first activated by ATP to form Glu-AMP and then transferred to the acceptor end of tRNA(Glu). The sequence is that of Glutamate--tRNA ligase from Chlorobium phaeobacteroides (strain BS1).